Here is an 875-residue protein sequence, read N- to C-terminus: Importin subunit beta-1 (875 aa).

At Met1 the chain carries N-acetylmethionine. 5 HEAT repeats span residues Glu2–Glu31, Leu33–Leu64, Ala84–Val122, Leu128–Asp159, and Ser169–Leu201. Position 12 is a phosphoserine (Ser12). Residues Ala21–Thr100 form the Importin N-terminal domain. N6-acetyllysine is present on Lys210. 14 HEAT repeats span residues Glu211–Leu246, Glu252–Glu301, Tyr313–Glu359, Val363–Leu393, Leu401–Leu437, Leu448–Ala484, Ser499–Lys536, Tyr543–Leu591, Ala599–Leu638, Leu643–Leu680, Leu685–Ile723, Leu731–Leu775, Asp785–Phe828, and Lys830–Lys872. The segment at Val285–Ala461 is essential for high affinity interaction with RPL23A. Residues Thr328–Trp341 are IAB-binding. Positions Asp333 to Asp418 are ran-GTP binding. N6-acetyllysine is present on residues Lys834 and Lys866.

Belongs to the importin beta family. Importin beta-1 subfamily. Forms a complex with an importin alpha subunit. Interacts with XPO1. Forms a heterodimer with IPO7. The KPNB1/IPO7 heterodimer interacts with H1 histone. Interacts with SNUPN. Interacts with H2A, H2B, H3 and H4 histones. Component of an import snRNP complex composed of KPNB1, SNUPN, SMN1 and ZNF259. Component of a nuclear export receptor complex composed of KPNB1, Ran, SNUPN and XPO1. Interacts with SRY. Interacts with PRKCI/atypical protein kinase C iota. Interacts with KPNA2. Interacts with KPNA7. Interacts with SNAI1 (via zinc fingers) and SNAI2 (via zinc fingers). Interacts with SLC35G1 and STIM1. Interacts with DCAF8. Interacts with RAN. Interacts with NUMA1 (via C-terminus); this interaction is inhibited by RanGTP. Interacts with ZBED1/hDREF; required for nuclear import of ZBED1/hDREF. Interacts with SRP19. Interacts with RPL23A (via BIB domain), RPS7 and RPL5. In terms of processing, mono-ADP-ribosylated by PARP16.

The protein localises to the cytoplasm. Its subcellular location is the nucleus envelope. Its function is as follows. Functions in nuclear protein import, either in association with an adapter protein, like an importin-alpha subunit, which binds to nuclear localization signals (NLS) in cargo substrates, or by acting as autonomous nuclear transport receptor. Acting autonomously, serves itself as NLS receptor. Docking of the importin/substrate complex to the nuclear pore complex (NPC) is mediated by KPNB1 through binding to nucleoporin FxFG repeats and the complex is subsequently translocated through the pore by an energy requiring, Ran-dependent mechanism. At the nucleoplasmic side of the NPC, Ran binds to importin-beta and the three components separate and importin-alpha and -beta are re-exported from the nucleus to the cytoplasm where GTP hydrolysis releases Ran from importin. The directionality of nuclear import is thought to be conferred by an asymmetric distribution of the GTP- and GDP-bound forms of Ran between the cytoplasm and nucleus. Mediates autonomously the nuclear import of ribosomal proteins RPL23A, RPS7 and RPL5. In association with IPO7, mediates the nuclear import of H1 histone. In vitro, mediates nuclear import of H2A, H2B, H3 and H4 histones. Imports MRTFA, SNAI1 and PRKCI into the nucleus. The protein is Importin subunit beta-1 (Kpnb1) of Rattus norvegicus (Rat).